Here is a 428-residue protein sequence, read N- to C-terminus: Enolase (428 aa).

Gln-163 provides a ligand contact to (2R)-2-phosphoglycerate. Glu-205 (proton donor) is an active-site residue. 3 residues coordinate Mg(2+): Asp-242, Glu-285, and Asp-312. Residues Lys-337, Arg-366, Ser-367, and Lys-388 each contribute to the (2R)-2-phosphoglycerate site. Catalysis depends on Lys-337, which acts as the Proton acceptor.

It belongs to the enolase family. Requires Mg(2+) as cofactor.

The protein resides in the cytoplasm. It is found in the secreted. The protein localises to the cell surface. It carries out the reaction (2R)-2-phosphoglycerate = phosphoenolpyruvate + H2O. It participates in carbohydrate degradation; glycolysis; pyruvate from D-glyceraldehyde 3-phosphate: step 4/5. In terms of biological role, catalyzes the reversible conversion of 2-phosphoglycerate (2-PG) into phosphoenolpyruvate (PEP). It is essential for the degradation of carbohydrates via glycolysis. The chain is Enolase from Nitrosomonas eutropha (strain DSM 101675 / C91 / Nm57).